Reading from the N-terminus, the 358-residue chain is MSMAEVCCDSAVVVGAEAEARARARAGRRRRAGVEGAGRWNATATAAGVAAEEAATRKRRASGGEAGLVVVAKRHGAASVAGRRREMEDAVSLREAFAAPANGEVAAARCDFYGVFDGHGCSHVADACRERMHELVAEEMGAGSPAAAAREPASWTETMERSFARMDAEVIAGCRAESGSCRCEGQKCDHVGSTAVVAVVEESRVVVANCGDSRAVLCRGGAPVQLSSDHKPDRPDELERIEAAGGRVIFWEGARVLGVLAMSRSIGDAYLKPYVTAVPEVTVTGRSDFDECLILASDGLWDVVSNEAACEVAQSCLRRGRQRWCAEAAAVLTKLALARRSSDNISVVVVDLRRGNAL.

The PPM-type phosphatase domain maps to 74–352 (RHGAASVAGR…DNISVVVVDL (279 aa)). Mn(2+) contacts are provided by aspartate 117, glycine 118, aspartate 298, and aspartate 343.

This sequence belongs to the PP2C family. Mg(2+) serves as cofactor. It depends on Mn(2+) as a cofactor.

Its subcellular location is the nucleus. It localises to the cytoplasm. The protein localises to the cytosol. The enzyme catalyses O-phospho-L-seryl-[protein] + H2O = L-seryl-[protein] + phosphate. It carries out the reaction O-phospho-L-threonyl-[protein] + H2O = L-threonyl-[protein] + phosphate. In terms of biological role, involved in the regulation of abiotic stress responses. Acts as a negative regulator of abscisic acid (ABA) signaling and positive regulator of abiotic stress signaling. May be involved in panicle development. This chain is Probable protein phosphatase 2C 68, found in Oryza sativa subsp. japonica (Rice).